A 786-amino-acid polypeptide reads, in one-letter code: Endonuclease MutS2 (786 aa).

332–339 (GPNTGGKT) contacts ATP. Positions 711–786 (IDLRGMDSEE…GTGVTVVILK (76 aa)) constitute a Smr domain.

The protein belongs to the DNA mismatch repair MutS family. MutS2 subfamily. In terms of assembly, homodimer. Binds to stalled ribosomes, contacting rRNA.

Functionally, endonuclease that is involved in the suppression of homologous recombination and thus may have a key role in the control of bacterial genetic diversity. Acts as a ribosome collision sensor, splitting the ribosome into its 2 subunits. Detects stalled/collided 70S ribosomes which it binds and splits by an ATP-hydrolysis driven conformational change. Acts upstream of the ribosome quality control system (RQC), a ribosome-associated complex that mediates the extraction of incompletely synthesized nascent chains from stalled ribosomes and their subsequent degradation. Probably generates substrates for RQC. This is Endonuclease MutS2 from Clostridium perfringens (strain ATCC 13124 / DSM 756 / JCM 1290 / NCIMB 6125 / NCTC 8237 / Type A).